The sequence spans 503 residues: 26S proteasome non-ATPase regulatory subunit 5 (503 aa).

Residue A2 is modified to N-acetylalanine.

Belongs to the proteasome subunit S5B/HSM3 family. In terms of assembly, interacts with PSMC1, PSMC2, PSMD1 and PSMD6. Part of transient complex containing PSMD5, PSMC2, PSMC1 and PSMD2 formed during the assembly of the 26S proteasome.

Its function is as follows. Acts as a chaperone during the assembly of the 26S proteasome, specifically of the base subcomplex of the PA700/19S regulatory complex (RC). In the initial step of the base subcomplex assembly is part of an intermediate PSMD5:PSMC2:PSMC1:PSMD2 module which probably assembles with a PSMD10:PSMC4:PSMC5:PAAF1 module followed by dissociation of PSMD5. The protein is 26S proteasome non-ATPase regulatory subunit 5 (PSMD5) of Bos taurus (Bovine).